A 406-amino-acid chain; its full sequence is E3 ubiquitin-protein ligase RING1 (406 aa).

Threonine 24 carries the post-translational modification Phosphothreonine. The tract at residues 30 to 234 is necessary for transcriptional repression; it reads MDGTEIAVSP…GGAGSEDSGD (205 aa). A Phosphoserine modification is found at serine 38. The RING-type zinc finger occupies 48–88; that stretch reads CPICLDMLKNTMTTKECLHRFCSDCIVTALRSGNKECPTCR. Serine 140, serine 187, and serine 190 each carry phosphoserine. Disordered stretches follow at residues 151–263 and 309–354; these read HRAQ…GEIE and QQQE…PSLE. Over residues 175-187 the composition is skewed to acidic residues; that stretch reads EPGEGEGDGEDIS. Residues 201 to 204 carry the Nuclear localization signal motif; sequence KRPR. Gly residues predominate over residues 205–228; the sequence is GGGAGGSSVGTGGGAAGGACGGAG. The residue at position 215 (threonine 215) is a Phosphothreonine. Phosphoserine is present on residues serine 229 and serine 232. A necessary for interaction with CBX2 region spans residues 230 to 406; sequence EDSGDRGGTL…LCYAPTKDPK (177 aa). Residues 235-244 are compositionally biased toward gly residues; sequence RGGTLGGGTL. Positions 246 to 258 are enriched in pro residues; it reads PPSPPGAPSPPEP. A phosphoserine mark is found at serine 248 and serine 254. The segment covering 317-343 has biased composition (gly residues); sequence GGPGGGASDTGGPDGGGGERGVSGGGE.

In terms of assembly, component of chromatin-associated Polycomb (PcG) complexes. Part of the E2F6.com-1 complex in G0 phase composed of E2F6, MGA, MAX, TFDP1, CBX3, BAT8, EUHMTASE1, RING1, RNF2/RING2 MBLR, L3MBTL2 and YAF2. Interacts with CBX2 and PCGF6. Component of a PRC1-like complex. Component of repressive BCOR complex containing Polycomb group subcomplex at least composed of RYBP, PCGF1, BCOR and RNF2/RING2. Interacts with BMI1, PHC2, PCGF2, RNF2; CBX6, CBX7 and CBX8. Interacts with MN1. Interacts with USP26.

It localises to the nucleus speckle. The catalysed reaction is S-ubiquitinyl-[E2 ubiquitin-conjugating enzyme]-L-cysteine + [acceptor protein]-L-lysine = [E2 ubiquitin-conjugating enzyme]-L-cysteine + N(6)-ubiquitinyl-[acceptor protein]-L-lysine.. It functions in the pathway protein modification; protein ubiquitination. Its function is as follows. Constitutes one of the E3 ubiquitin-protein ligases that mediate monoubiquitination of 'Lys-119' of histone H2A, thereby playing a central role in histone code and gene regulation. H2A 'Lys-119' ubiquitination gives a specific tag for epigenetic transcriptional repression and participates in X chromosome inactivation of female mammals. Essential component of a Polycomb group (PcG) multiprotein PRC1-like complex, a complex class required to maintain the transcriptionally repressive state of many genes, including Hox genes, throughout development. PcG PRC1 complex acts via chromatin remodeling and modification of histones, rendering chromatin heritably changed in its expressibility. Compared to RNF2/RING2, it does not have the main E3 ubiquitin ligase activity on histone H2A, and it may rather act as a modulator of RNF2/RING2 activity. The protein is E3 ubiquitin-protein ligase RING1 of Rattus norvegicus (Rat).